The following is a 90-amino-acid chain: U7-theraphotoxin-Hhn1j (90 aa).

The first 19 residues, 1-19 (MKTAIFTVVLALAVFAVLS), serve as a signal peptide directing secretion. Residues 20–50 (FGWEANEKALSEEFTELIHEKEAASETEARE) constitute a propeptide that is removed on maturation. Intrachain disulfides connect Cys-51–Cys-65, Cys-58–Cys-70, and Cys-64–Cys-81.

The protein belongs to the neurotoxin 10 (Hwtx-1) family. 13 (Hntx-13) subfamily. As to expression, expressed by the venom gland.

It localises to the secreted. Ion channel inhibitor. The chain is U7-theraphotoxin-Hhn1j from Cyriopagopus hainanus (Chinese bird spider).